Consider the following 439-residue polypeptide: GTPase Der (439 aa).

2 EngA-type G domains span residues 3-167 and 176-351; these read PTVA…DKVG and IKVA…GNYT. GTP is bound by residues 9–16, 56–60, 119–122, 182–189, 229–233, and 294–297; these read GRPNVGKS, DTGGI, NKID, GKPNTGKS, DTAGL, and NKWD. Residues 352 to 436 enclose the KH-like domain; it reads RRITTGQIND…PIVFLIREKG (85 aa).

The protein belongs to the TRAFAC class TrmE-Era-EngA-EngB-Septin-like GTPase superfamily. EngA (Der) GTPase family. In terms of assembly, associates with the 50S ribosomal subunit.

In terms of biological role, GTPase that plays an essential role in the late steps of ribosome biogenesis. This chain is GTPase Der, found in Caldicellulosiruptor saccharolyticus (strain ATCC 43494 / DSM 8903 / Tp8T 6331).